Here is a 326-residue protein sequence, read N- to C-terminus: Ribosomal large subunit pseudouridine synthase D (326 aa).

In terms of domain architecture, S4 RNA-binding spans 18-91 (QRLDQALAEM…IPLDIVYEDE (74 aa)). Residue aspartate 139 is part of the active site.

The protein belongs to the pseudouridine synthase RluA family. In late stage pre-50S ribosomal subunit interacts with ObgE and DarP(YjgA).

The protein resides in the cytoplasm. It catalyses the reaction uridine(1911/1915/1917) in 23S rRNA = pseudouridine(1911/1915/1917) in 23S rRNA. Its function is as follows. Responsible for synthesis of pseudouridine from uracil at positions 1911, 1915 and 1917 in 23S ribosomal RNA. Other positions are not modified. Uridine isomerization occurs as a late step during the assembly of the large ribosomal subunit. Member of a network of 50S ribosomal subunit biogenesis factors (ObgE, RluD, RsfS and DarP(YjgA)) which assembles along the 30S-50S interface, allowing 23S rRNA modification and preventing incorrect 23S rRNA structures from forming. The sequence is that of Ribosomal large subunit pseudouridine synthase D from Escherichia coli (strain K12).